A 408-amino-acid chain; its full sequence is Na(+)-translocating NADH-quinone reductase subunit F (408 aa).

A helical transmembrane segment spans residues 4 to 24 (IYLGVGMFIAIVLALVLIIMF). Positions 33-127 (GEVTISINGD…DMDIELPEEI (95 aa)) constitute a 2Fe-2S ferredoxin-type domain. Residues Cys-70, Cys-76, Cys-79, and Cys-111 each coordinate [2Fe-2S] cluster. An FAD-binding FR-type domain is found at 130-270 (IKKWDCEVIS…SGPFGEFFAK (141 aa)).

Belongs to the NqrF family. As to quaternary structure, composed of six subunits; NqrA, NqrB, NqrC, NqrD, NqrE and NqrF. The cofactor is [2Fe-2S] cluster. It depends on FAD as a cofactor.

The protein localises to the cell inner membrane. It catalyses the reaction a ubiquinone + n Na(+)(in) + NADH + H(+) = a ubiquinol + n Na(+)(out) + NAD(+). Functionally, NQR complex catalyzes the reduction of ubiquinone-1 to ubiquinol by two successive reactions, coupled with the transport of Na(+) ions from the cytoplasm to the periplasm. The first step is catalyzed by NqrF, which accepts electrons from NADH and reduces ubiquinone-1 to ubisemiquinone by a one-electron transfer pathway. The chain is Na(+)-translocating NADH-quinone reductase subunit F from Pseudoalteromonas atlantica (strain T6c / ATCC BAA-1087).